The chain runs to 284 residues: L-ribulose-5-phosphate 3-epimerase UlaE (284 aa).

Belongs to the L-ribulose-5-phosphate 3-epimerase family.

It catalyses the reaction L-ribulose 5-phosphate = L-xylulose 5-phosphate. It functions in the pathway cofactor degradation; L-ascorbate degradation; D-xylulose 5-phosphate from L-ascorbate: step 3/4. In terms of biological role, catalyzes the isomerization of L-xylulose-5-phosphate to L-ribulose-5-phosphate. Is involved in the anaerobic L-ascorbate utilization. In Salmonella heidelberg (strain SL476), this protein is L-ribulose-5-phosphate 3-epimerase UlaE.